The sequence spans 222 residues: Abasic site processing protein YedK (222 aa).

Cys-2 acts as the Nucleophile in catalysis. Cys-2 is subject to Thiazolidine linkage to a ring-opened DNA abasic site. Glu-105 is a catalytic residue.

This sequence belongs to the SOS response-associated peptidase family.

Its activity is regulated as follows. Formation and reversal of DNA-protein cross-link depends on DNA context. Catalyzes formation of the thiazolidine linkage in presence of abasic sites in single-stranded DNA. Mediates the reversal of the thiazolidine cross-link in presence of double stranded DNA. Its function is as follows. Sensor of abasic sites in single-stranded DNA (ssDNA) required to preserve genome integrity by promoting error-free repair of abasic sites. Recognizes and binds abasic sites in ssDNA at replication forks and chemically modifies the lesion by forming a covalent cross-link with DNA: forms a stable thiazolidine linkage between a ring-opened abasic site and the alpha-amino and sulfhydryl substituents of its N-terminal catalytic cysteine residue. The DNA-protein cross-link is then reversed: able to catalyze the reversal of the thiazolidine cross-link and cycle between a cross-link and a non-cross-linked state depending on DNA context: mediates self-reversal of the thiazolidine cross-link in double stranded DNA. May act as a protease: mediates autocatalytic processing of its N-terminal methionine in order to expose the catalytic cysteine. The protein is Abasic site processing protein YedK of Escherichia coli (strain K12).